A 1295-amino-acid polypeptide reads, in one-letter code: Phosphoribosylformylglycinamidine synthase (1295 aa).

The interval 305–327 is disordered; it reads WPGAATGSGGEIRDEGATGRGAK. Residues 307–318 and Ala-678 contribute to the ATP site; that span reads GAATGSGGEIRD. Mg(2+)-binding residues include Glu-718, Asn-722, and Asp-884. Ser-886 contacts ATP. The Glutamine amidotransferase type-1 domain maps to 1042 to 1295; the sequence is VAVLREQGVN…IFRNARKQLG (254 aa). Cys-1135 serves as the catalytic Nucleophile. Active-site residues include His-1260 and Glu-1262.

The protein in the N-terminal section; belongs to the FGAMS family. Monomer.

It is found in the cytoplasm. It catalyses the reaction N(2)-formyl-N(1)-(5-phospho-beta-D-ribosyl)glycinamide + L-glutamine + ATP + H2O = 2-formamido-N(1)-(5-O-phospho-beta-D-ribosyl)acetamidine + L-glutamate + ADP + phosphate + H(+). It functions in the pathway purine metabolism; IMP biosynthesis via de novo pathway; 5-amino-1-(5-phospho-D-ribosyl)imidazole from N(2)-formyl-N(1)-(5-phospho-D-ribosyl)glycinamide: step 1/2. Functionally, phosphoribosylformylglycinamidine synthase involved in the purines biosynthetic pathway. Catalyzes the ATP-dependent conversion of formylglycinamide ribonucleotide (FGAR) and glutamine to yield formylglycinamidine ribonucleotide (FGAM) and glutamate. The sequence is that of Phosphoribosylformylglycinamidine synthase from Shigella sonnei (strain Ss046).